The primary structure comprises 212 residues: Phosphatidylserine decarboxylase proenzyme (212 aa).

The active-site Schiff-base intermediate with substrate; via pyruvic acid is the Ser182. Ser182 is subject to Pyruvic acid (Ser); by autocatalysis.

Belongs to the phosphatidylserine decarboxylase family. PSD-A subfamily. As to quaternary structure, heterodimer of a large membrane-associated beta subunit and a small pyruvoyl-containing alpha subunit. Requires pyruvate as cofactor. In terms of processing, is synthesized initially as an inactive proenzyme. Formation of the active enzyme involves a self-maturation process in which the active site pyruvoyl group is generated from an internal serine residue via an autocatalytic post-translational modification. Two non-identical subunits are generated from the proenzyme in this reaction, and the pyruvate is formed at the N-terminus of the alpha chain, which is derived from the carboxyl end of the proenzyme. The post-translation cleavage follows an unusual pathway, termed non-hydrolytic serinolysis, in which the side chain hydroxyl group of the serine supplies its oxygen atom to form the C-terminus of the beta chain, while the remainder of the serine residue undergoes an oxidative deamination to produce ammonia and the pyruvoyl prosthetic group on the alpha chain.

It is found in the cell membrane. The enzyme catalyses a 1,2-diacyl-sn-glycero-3-phospho-L-serine + H(+) = a 1,2-diacyl-sn-glycero-3-phosphoethanolamine + CO2. Its pathway is phospholipid metabolism; phosphatidylethanolamine biosynthesis; phosphatidylethanolamine from CDP-diacylglycerol: step 2/2. Functionally, catalyzes the formation of phosphatidylethanolamine (PtdEtn) from phosphatidylserine (PtdSer). The sequence is that of Phosphatidylserine decarboxylase proenzyme from Chlorobium luteolum (strain DSM 273 / BCRC 81028 / 2530) (Pelodictyon luteolum).